The chain runs to 460 residues: Adenosylhomocysteinase (460 aa).

3 residues coordinate substrate: Thr83, Asp158, and Glu184. 185–187 (TTT) serves as a coordination point for NAD(+). Residues Lys214 and Asp218 each coordinate substrate. NAD(+) contacts are provided by residues Asn219, 248–253 (GYGDVG), Glu271, 327–329 (IGH), and Asn373.

This sequence belongs to the adenosylhomocysteinase family. It depends on NAD(+) as a cofactor.

It localises to the cytoplasm. It catalyses the reaction S-adenosyl-L-homocysteine + H2O = L-homocysteine + adenosine. Its pathway is amino-acid biosynthesis; L-homocysteine biosynthesis; L-homocysteine from S-adenosyl-L-homocysteine: step 1/1. May play a key role in the regulation of the intracellular concentration of adenosylhomocysteine. The protein is Adenosylhomocysteinase of Bdellovibrio bacteriovorus (strain ATCC 15356 / DSM 50701 / NCIMB 9529 / HD100).